Here is a 340-residue protein sequence, read N- to C-terminus: Eukaryotic translation initiation factor 3 subunit I (340 aa).

5 WD repeats span residues 8–47 (GHER…RLGT), 50–91 (GHQG…KVWD), 150–189 (CTES…QLEN), 194–233 (EFDH…ILKT), and 291–330 (GHFG…FDFM).

Belongs to the eIF-3 subunit I family. As to quaternary structure, component of the eukaryotic translation initiation factor 3 (eIF-3) complex.

Its subcellular location is the cytoplasm. Functionally, component of the eukaryotic translation initiation factor 3 (eIF-3) complex, which is involved in protein synthesis of a specialized repertoire of mRNAs and, together with other initiation factors, stimulates binding of mRNA and methionyl-tRNAi to the 40S ribosome. The eIF-3 complex specifically targets and initiates translation of a subset of mRNAs involved in cell proliferation. This Aspergillus fumigatus (strain CBS 144.89 / FGSC A1163 / CEA10) (Neosartorya fumigata) protein is Eukaryotic translation initiation factor 3 subunit I (tif34).